The following is a 492-amino-acid chain: MDPSSKKVTGRLMLAVGGAVLGSLQFGYNTGVINAPQKVIEEFYNQTWNHRYGEPIPSTTLTTLWSLSVAIFSVGGMIGSFSVGLFVNRFGRRNSMLMMNLLAFVAAVLMGFSKLGKSFEMLILGRFIIGVYCGLTTGFVPMYVGEVSPTALRGALGTLHQLGIVVGILIAQVFGLDSIMGNADLWPLLLSVIFIPALLQCILLPFCPESPRFLLINRNEENRAKSVLKKLRGTADVTRDLQEMKEEGRQMMREKKVTILELFRSPAYRQPILIAVVLQLSQQLSGINAVFYYSTSIFEKAGVQQPVYATIGSGIVNTAFTVVSLFVVERAGRRTLHLIGLAGMAGCAVLMTIALALLERLPWMSYLSIVAIFGFVAFFEVGPGPIPWFIVAELFSQGPRPAAIAVAGFSNWTSNFIVGMCFQYVEQLCGPYVFIIFTVLLVLFFIFTYFKVPETKGRTFDEIASGFRQGGASQSDKTPEELFHPLGADSQV.

Methionine 1 is modified (N-acetylmethionine). Residues methionine 1–arginine 11 are Cytoplasmic-facing. Residues leucine 12–isoleucine 33 form a helical membrane-spanning segment. Residues asparagine 34–serine 66 are Extracellular-facing. Asparagine 45 carries N-linked (GlcNAc...) asparagine glycosylation. A helical transmembrane segment spans residues leucine 67 to valine 87. Topologically, residues asparagine 88–phenylalanine 90 are cytoplasmic. The helical transmembrane segment at glycine 91–phenylalanine 112 threads the bilayer. The Extracellular segment spans residues serine 113–glutamate 120. A helical membrane pass occupies residues methionine 121–valine 144. The Cytoplasmic portion of the chain corresponds to glycine 145 to alanine 155. Residues leucine 156–leucine 176 traverse the membrane as a helical segment. Glutamine 161 lines the D-glucose pocket. Over aspartate 177–leucine 185 the chain is Extracellular. The helical transmembrane segment at tryptophan 186 to phenylalanine 206 threads the bilayer. Residues cysteine 207–proline 271 are Cytoplasmic-facing. At serine 226 the chain carries Phosphoserine. A helical transmembrane segment spans residues isoleucine 272–tyrosine 293. Residues glutamine 282–glutamine 283 and asparagine 288 each bind D-glucose. Residues serine 294–proline 306 are Extracellular-facing. A helical transmembrane segment spans residues valine 307–valine 328. Asparagine 317 lines the D-glucose pocket. Residues glutamate 329–arginine 334 lie on the Cytoplasmic side of the membrane. The helical transmembrane segment at threonine 335 to leucine 355 threads the bilayer. The Extracellular segment spans residues alanine 356 to serine 365. Residues tyrosine 366–tryptophan 388 form a helical membrane-spanning segment. The D-glucose site is built by glutamate 380 and tryptophan 388. The Cytoplasmic portion of the chain corresponds to phenylalanine 389–proline 401. Residues alanine 402–phenylalanine 422 traverse the membrane as a helical segment. At glutamine 423–cysteine 429 the chain is on the extracellular side. Residues glycine 430–phenylalanine 450 traverse the membrane as a helical segment. Residues lysine 451–valine 492 lie on the Cytoplasmic side of the membrane. Serine 465 bears the Phosphoserine mark. Positions arginine 468–valine 492 are disordered. Threonine 478 carries the phosphothreonine modification. Serine 490 carries the post-translational modification Phosphoserine.

This sequence belongs to the major facilitator superfamily. Sugar transporter (TC 2.A.1.1) family. Glucose transporter subfamily. As to quaternary structure, found in a complex with ADD2, DMTN and SLC2A1. Interacts (via C-terminus cytoplasmic region) with DMTN isoform 2. Interacts with SNX27; the interaction is required when endocytosed to prevent degradation in lysosomes and promote recycling to the plasma membrane. Interacts with GIPC (via PDZ domain). Interacts with STOM. Interacts with SGTA (via Gln-rich region). Interacts with isoform 1 of BSG. Interacts with SMIM43; the interaction may promote SLC2A1-mediated glucose transport to meet the energy needs of mesendoderm differentiation. Phosphorylation at Ser-226 by PKC promotes glucose uptake by increasing cell membrane localization. In terms of tissue distribution, retina (at protein level).

The protein resides in the cell membrane. It localises to the photoreceptor inner segment. The enzyme catalyses D-glucose(out) = D-glucose(in). With respect to regulation, the uptake of glucose is inhibited by cytochalasin B. Glucose uptake is increased in response to phorbol ester 12-O-tetradecanoylphorbol-13-acetate (TPA) treatment: TPA-induced glucose uptake requires phosphorylation at Ser-226. Functionally, facilitative glucose transporter, which is responsible for constitutive or basal glucose uptake. Has a very broad substrate specificity; can transport a wide range of aldoses including both pentoses and hexoses. Most important energy carrier of the brain: present at the blood-brain barrier and assures the energy-independent, facilitative transport of glucose into the brain. In association with BSG and NXNL1, promotes retinal cone survival by increasing glucose uptake into photoreceptors. Required for mesendoderm differentiation. In Mus musculus (Mouse), this protein is Solute carrier family 2, facilitated glucose transporter member 1.